The following is a 207-amino-acid chain: Serotonin N-acetyltransferase (207 aa).

Residues 1 to 28 form a disordered region; sequence MSMQSTHPPKPEAPRLPPGIPESPSCQR. Position 31 is a phosphothreonine; by PKA (Thr31). The 168-residue stretch at 35-202 folds into the N-acetyltransferase domain; the sequence is SEFRCLTPED…CSLRDHPFLR (168 aa). Leu124 provides a ligand contact to substrate. Acetyl-CoA-binding positions include 124–126 and 132–137; these read LAV and QQGRGP. Position 159 (Met159) interacts with substrate. 168 to 170 contacts acetyl-CoA; that stretch reads YER. Position 205 is a phosphoserine (Ser205).

The protein belongs to the acetyltransferase family. AANAT subfamily. In terms of assembly, monomer. Interacts with several 14-3-3 proteins, including YWHAB, YWHAE, YWHAG and YWHAZ, preferentially when phosphorylated at Thr-31. Phosphorylation on Ser-205 also allows binding to YWHAZ, but with lower affinity. The interaction with YWHAZ considerably increases affinity for arylalkylamines and acetyl-CoA and protects the enzyme from dephosphorylation and proteasomal degradation. It may also prevent thiol-dependent inactivation. Post-translationally, cAMP-dependent phosphorylation on both N-terminal Thr-31 and C-terminal Ser-205 regulates AANAT activity by promoting interaction with 14-3-3 proteins.

Its subcellular location is the cytoplasm. The enzyme catalyses a 2-arylethylamine + acetyl-CoA = an N-acetyl-2-arylethylamine + CoA + H(+). It participates in aromatic compound metabolism; melatonin biosynthesis; melatonin from serotonin: step 1/2. Functionally, controls the night/day rhythm of melatonin production in the pineal gland. Catalyzes the N-acetylation of serotonin into N-acetylserotonin, the penultimate step in the synthesis of melatonin. This Pan troglodytes (Chimpanzee) protein is Serotonin N-acetyltransferase (AANAT).